Consider the following 467-residue polypeptide: L-seryl-tRNA(Sec) selenium transferase (467 aa).

Lys-298 bears the N6-(pyridoxal phosphate)lysine mark.

This sequence belongs to the SelA family. Requires pyridoxal 5'-phosphate as cofactor.

It localises to the cytoplasm. It catalyses the reaction L-seryl-tRNA(Sec) + selenophosphate + H(+) = L-selenocysteinyl-tRNA(Sec) + phosphate. It participates in aminoacyl-tRNA biosynthesis; selenocysteinyl-tRNA(Sec) biosynthesis; selenocysteinyl-tRNA(Sec) from L-seryl-tRNA(Sec) (bacterial route): step 1/1. In terms of biological role, converts seryl-tRNA(Sec) to selenocysteinyl-tRNA(Sec) required for selenoprotein biosynthesis. The sequence is that of L-seryl-tRNA(Sec) selenium transferase from Alkaliphilus oremlandii (strain OhILAs) (Clostridium oremlandii (strain OhILAs)).